We begin with the raw amino-acid sequence, 96 residues long: Aspartyl/glutamyl-tRNA(Asn/Gln) amidotransferase subunit C (96 aa).

Belongs to the GatC family. As to quaternary structure, heterotrimer of A, B and C subunits.

The enzyme catalyses L-glutamyl-tRNA(Gln) + L-glutamine + ATP + H2O = L-glutaminyl-tRNA(Gln) + L-glutamate + ADP + phosphate + H(+). It carries out the reaction L-aspartyl-tRNA(Asn) + L-glutamine + ATP + H2O = L-asparaginyl-tRNA(Asn) + L-glutamate + ADP + phosphate + 2 H(+). In terms of biological role, allows the formation of correctly charged Asn-tRNA(Asn) or Gln-tRNA(Gln) through the transamidation of misacylated Asp-tRNA(Asn) or Glu-tRNA(Gln) in organisms which lack either or both of asparaginyl-tRNA or glutaminyl-tRNA synthetases. The reaction takes place in the presence of glutamine and ATP through an activated phospho-Asp-tRNA(Asn) or phospho-Glu-tRNA(Gln). In Wolinella succinogenes (strain ATCC 29543 / DSM 1740 / CCUG 13145 / JCM 31913 / LMG 7466 / NCTC 11488 / FDC 602W) (Vibrio succinogenes), this protein is Aspartyl/glutamyl-tRNA(Asn/Gln) amidotransferase subunit C.